We begin with the raw amino-acid sequence, 429 residues long: Adenylosuccinate synthetase (429 aa).

GTP-binding positions include 12–18 (GDEGKGK) and 40–42 (GHT). The active-site Proton acceptor is D13. 2 residues coordinate Mg(2+): D13 and G40. IMP is bound by residues 13–16 (DEGK), 38–41 (NAGH), T129, R143, Q223, T238, and R302. Catalysis depends on H41, which acts as the Proton donor. A substrate-binding site is contributed by 298-304 (TVTGRAR). GTP-binding positions include R304, 330–332 (KLD), and 412–414 (STS).

It belongs to the adenylosuccinate synthetase family. In terms of assembly, homodimer. The cofactor is Mg(2+).

It is found in the cytoplasm. The enzyme catalyses IMP + L-aspartate + GTP = N(6)-(1,2-dicarboxyethyl)-AMP + GDP + phosphate + 2 H(+). Its pathway is purine metabolism; AMP biosynthesis via de novo pathway; AMP from IMP: step 1/2. Plays an important role in the de novo pathway of purine nucleotide biosynthesis. Catalyzes the first committed step in the biosynthesis of AMP from IMP. The sequence is that of Adenylosuccinate synthetase from Acidiphilium cryptum (strain JF-5).